Consider the following 86-residue polypeptide: Small ribosomal subunit protein bS20 (86 aa).

Residues 1 to 25 (MANIKSQQKRNKTNERARLRNKSVK) form a disordered region.

This sequence belongs to the bacterial ribosomal protein bS20 family.

Binds directly to 16S ribosomal RNA. The chain is Small ribosomal subunit protein bS20 from Mycobacterium avium (strain 104).